Consider the following 492-residue polypeptide: N-succinylglutamate 5-semialdehyde dehydrogenase (492 aa).

220-225 (GSANTG) lines the NAD(+) pocket. Catalysis depends on residues glutamate 243 and cysteine 277.

This sequence belongs to the aldehyde dehydrogenase family. AstD subfamily.

It carries out the reaction N-succinyl-L-glutamate 5-semialdehyde + NAD(+) + H2O = N-succinyl-L-glutamate + NADH + 2 H(+). Its pathway is amino-acid degradation; L-arginine degradation via AST pathway; L-glutamate and succinate from L-arginine: step 4/5. Catalyzes the NAD-dependent reduction of succinylglutamate semialdehyde into succinylglutamate. In Escherichia coli O81 (strain ED1a), this protein is N-succinylglutamate 5-semialdehyde dehydrogenase.